The chain runs to 2489 residues: Protein YPR117W (2489 aa).

The next 2 helical transmembrane spans lie at 19–39 (FMLF…WILM) and 128–148 (VLSI…LALT). N-linked (GlcNAc...) asparagine glycans are attached at residues Asn191, Asn210, Asn311, Asn452, Asn468, Asn605, Asn638, Asn663, Asn698, Asn789, Asn835, Asn981, Asn1255, Asn1404, and Asn1476. The stretch at 1610–1676 (LTQEKLATER…RLHTVNTILS (67 aa)) forms a coiled coil. Residues 1685-1704 (PGGNTDGDSSSSLSDTDVNL) form a disordered region. Over residues 1690–1704 (DGDSSSSLSDTDVNL) the composition is skewed to low complexity. N-linked (GlcNAc...) asparagine glycans are attached at residues Asn1978 and Asn2189. Ser2254 and Ser2278 each carry phosphoserine. N-linked (GlcNAc...) asparagine glycosylation occurs at Asn2279. The segment covering 2451–2471 (SSTHSSDIRSINSDETYNEND) has biased composition (polar residues). The segment at 2451 to 2489 (SSTHSSDIRSINSDETYNENDGNGVKPFYPVTSEFSKNK) is disordered.

The protein localises to the cell membrane. Its subcellular location is the endoplasmic reticulum membrane. It localises to the mitochondrion membrane. Functionally, tube-forming lipid transport protein which may bind to phosphatidylinositols and may affect phosphatidylinositol-4,5-bisphosphate (PtdIns-4,5-P2) distribution. The chain is Protein YPR117W from Saccharomyces cerevisiae (strain ATCC 204508 / S288c) (Baker's yeast).